A 457-amino-acid polypeptide reads, in one-letter code: Serine--tRNA ligase (457 aa).

Residue 252-254 participates in L-serine binding; that stretch reads TAE. Residues 283-285 and valine 299 contribute to the ATP site; that span reads RKE. Glutamate 306 serves as a coordination point for L-serine. Residue 370 to 373 participates in ATP binding; sequence EVVS. Threonine 406 lines the L-serine pocket.

The protein belongs to the class-II aminoacyl-tRNA synthetase family. Type-1 seryl-tRNA synthetase subfamily. As to quaternary structure, homodimer. The tRNA molecule binds across the dimer.

Its subcellular location is the cytoplasm. The enzyme catalyses tRNA(Ser) + L-serine + ATP = L-seryl-tRNA(Ser) + AMP + diphosphate + H(+). It carries out the reaction tRNA(Sec) + L-serine + ATP = L-seryl-tRNA(Sec) + AMP + diphosphate + H(+). Its pathway is aminoacyl-tRNA biosynthesis; selenocysteinyl-tRNA(Sec) biosynthesis; L-seryl-tRNA(Sec) from L-serine and tRNA(Sec): step 1/1. Its function is as follows. Catalyzes the attachment of serine to tRNA(Ser). Is also able to aminoacylate tRNA(Sec) with serine, to form the misacylated tRNA L-seryl-tRNA(Sec), which will be further converted into selenocysteinyl-tRNA(Sec). The protein is Serine--tRNA ligase of Thermococcus onnurineus (strain NA1).